Reading from the N-terminus, the 1075-residue chain is DNA-directed RNA polymerase subunit beta (1075 aa).

The protein belongs to the RNA polymerase beta chain family. In plastids the minimal PEP RNA polymerase catalytic core is composed of four subunits: alpha, beta, beta', and beta''. When a (nuclear-encoded) sigma factor is associated with the core the holoenzyme is formed, which can initiate transcription.

Its subcellular location is the plastid. It is found in the chloroplast. The catalysed reaction is RNA(n) + a ribonucleoside 5'-triphosphate = RNA(n+1) + diphosphate. Functionally, DNA-dependent RNA polymerase catalyzes the transcription of DNA into RNA using the four ribonucleoside triphosphates as substrates. The sequence is that of DNA-directed RNA polymerase subunit beta from Saccharum officinarum (Sugarcane).